The following is a 677-amino-acid chain: Zinc finger and BTB domain-containing protein 5 (677 aa).

The BTB domain occupies Cys-24–Glu-93. Residues Leu-158–Gln-181 show a composition bias toward polar residues. Disordered regions lie at residues Leu-158–Asn-252 and Ser-287–Cys-312. Phosphoserine is present on Ser-234. Lys-239 is covalently cross-linked (Glycyl lysine isopeptide (Lys-Gly) (interchain with G-Cter in SUMO2)). Polar residues predominate over residues Ser-287–Asp-300. Glycyl lysine isopeptide (Lys-Gly) (interchain with G-Cter in SUMO2) cross-links involve residues Lys-322 and Lys-330. The interval Ser-331 to Asp-387 is disordered. Residues Ala-350–Ala-365 show a composition bias toward low complexity. The segment covering Glu-366 to Phe-379 has biased composition (basic and acidic residues). A Phosphoserine modification is found at Ser-371. Residues Lys-404 and Lys-415 each participate in a glycyl lysine isopeptide (Lys-Gly) (interchain with G-Cter in SUMO2) cross-link. The interval Leu-447–Ala-474 is disordered. The segment covering Ser-449–Ser-464 has biased composition (low complexity). A Glycyl lysine isopeptide (Lys-Gly) (interchain with G-Cter in SUMO2) cross-link involves residue Lys-541. Positions Gln-552 to Pro-576 are enriched in polar residues. A disordered region spans residues Gln-552–Thr-585. Glycyl lysine isopeptide (Lys-Gly) (interchain with G-Cter in SUMO2) cross-links involve residues Lys-594 and Lys-597. The segment at Tyr-613–His-635 adopts a C2H2-type 1 zinc-finger fold. The C2H2-type 2; atypical zinc-finger motif lies at Tyr-641–Cys-664. Glycyl lysine isopeptide (Lys-Gly) (interchain with G-Cter in SUMO2) cross-links involve residues Lys-645 and Lys-658.

It is found in the nucleus. Functionally, may be involved in transcriptional regulation. The protein is Zinc finger and BTB domain-containing protein 5 (ZBTB5) of Homo sapiens (Human).